We begin with the raw amino-acid sequence, 55 residues long: Large ribosomal subunit protein bL33 (55 aa).

It belongs to the bacterial ribosomal protein bL33 family.

In Methylorubrum extorquens (strain CM4 / NCIMB 13688) (Methylobacterium extorquens), this protein is Large ribosomal subunit protein bL33.